We begin with the raw amino-acid sequence, 720 residues long: NAD(+) hydrolase ApTIR (720 aa).

The TIR domain maps to 1-131 (MRYDAFISYS…AVPPALRGVF (131 aa)). NAD(+)-binding positions include 10-11 (SH) and Ala48. Glu84 is a catalytic residue. Residues 192–211 (GALAVVCALLLLVAGTAVAW) form a helical membrane-spanning segment. Disordered regions lie at residues 231–275 (ATAA…AVAE) and 292–359 (EGIA…EEAV). 2 stretches are compositionally biased toward basic and acidic residues: residues 256–268 (EQQR…EEAR) and 307–359 (AEAR…EEAV). A coiled-coil region spans residues 313–362 (RGVADAEKAKANRAAAEAERQRKIAADEQRKAHEAAAEAERQREEAVKQQ). 7 WD repeats span residues 420–459 (GHTA…APRR), 465–504 (SSTA…APRR), 510–549 (GHTD…APRR), 555–594 (DHTA…APRR), 600–639 (GHTA…APRR), 645–684 (GHTA…APRR), and 690–720 (GHTD…CCGM).

It is found in the cell membrane. It catalyses the reaction NAD(+) + H2O = ADP-D-ribose + nicotinamide + H(+). In terms of biological role, NAD(+) hydrolase (NADase) that catalyzes cleavage of NAD(+) into ADP-D-ribose (ADPR) and nicotinamide. This Actinoplanes sp. (strain ATCC 31044 / CBS 674.73 / SE50/110) protein is NAD(+) hydrolase ApTIR.